An 89-amino-acid polypeptide reads, in one-letter code: Small ribosomal subunit protein uS15 (89 aa).

The protein belongs to the universal ribosomal protein uS15 family. Part of the 30S ribosomal subunit. Forms a bridge to the 50S subunit in the 70S ribosome, contacting the 23S rRNA.

Functionally, one of the primary rRNA binding proteins, it binds directly to 16S rRNA where it helps nucleate assembly of the platform of the 30S subunit by binding and bridging several RNA helices of the 16S rRNA. Forms an intersubunit bridge (bridge B4) with the 23S rRNA of the 50S subunit in the ribosome. In Edwardsiella ictaluri (strain 93-146), this protein is Small ribosomal subunit protein uS15.